The primary structure comprises 452 residues: Tripartite motif-containing protein 51G (452 aa).

The segment at 15–56 adopts an RING-type zinc-finger fold; sequence CPICMNYFIDPVTIDCGHSFCRPCFYLNWQDMAVLAQCSKCK. Residues 88-129 form a B box-type zinc finger; the sequence is SEEQICGTHRETKEMFCEVDKSLLCLLCSNSQEHRNHRHCPT. Zn(2+)-binding residues include cysteine 93, histidine 96, cysteine 115, and histidine 121. Positions 269-452 constitute a B30.2/SPRY domain; it reads EFSAGPIIGL…LWPIICCSHF (184 aa).

Belongs to the TRIM/RBCC family.

The protein is Tripartite motif-containing protein 51G of Homo sapiens (Human).